The sequence spans 563 residues: Calmodulin-binding protein 60 G (563 aa).

The segment at 1-76 is calmodulin-binding; it reads MKIRNSPSFH…SSCVSMERSR (76 aa). The interval 147–263 is DNA-binding; sequence ESWTVEGFNR…VSATRLAERK (117 aa).

This sequence belongs to the plant ACBP60 protein family. Interacts with calmodulin (CaM) in the presence of calcium ions; this interaction is required for defense responses. In terms of assembly, (Microbial infection) Interacts with V.dahliae SCP41; the interaction is direct and inhibits CBP60G. In terms of tissue distribution, expressed in seedlings, roots, leaves, inflorescences and flowers, and, to a lower extent, in siliques. Particularly present in guard cells.

The protein localises to the nucleus. Its function is as follows. Transcription activator that binds DNA in a sequence-specific manner, 5'-GAAATTTTGG-3', to promote the expression of target genes. Recruited to the promoter of ICS1 and other defense-related genes (e.g. PR1, PR2 and EDS5) in response to both biotic (e.g. Pseudomonas syringae pv. maculicola ES4326, P.syringae pv. tomato DC3000, and microbe-associated molecular patterns (MAMPs) such as flg22) and abiotic stresses (e.g. UV-B, drought and abscisic acid), thus triggering rapid defense responses by stimulating salicylic acid (SA) biosynthesis. Involved in basal and systemic acquired resistance to P.syringae and Hyaloperonospora arabidopsidis. Mediates resistance to drought and sensitivity to abscisic acid (ABA), especially for ABA-mediated signaling process that regulates early seedling growth. In Arabidopsis thaliana (Mouse-ear cress), this protein is Calmodulin-binding protein 60 G.